Reading from the N-terminus, the 802-residue chain is DEAD-box ATP-dependent RNA helicase 28 (802 aa).

The tract at residues Met1 to Pro179 is disordered. Composition is skewed to acidic residues over residues Gly76–Glu131 and Lys138–Glu169. Coiled coils occupy residues Asp90–Val122 and Gln149–Ser174. The Q motif signature appears at Asn194–Ala222. In terms of domain architecture, Helicase ATP-binding spans Ile225–Leu399. Ala238–Thr245 serves as a coordination point for ATP. The DEAD box signature appears at Asp347–Asp350. The region spanning Val429–Ala573 is the Helicase C-terminal domain. Positions Val572–Lys616 form a coiled coil. Residues Lys639 to Lys802 are disordered. Over residues Ser644–Gln659 the composition is skewed to polar residues. A compositionally biased stretch (basic residues) spans Lys666–Arg684. The stretch at Arg671–Lys712 forms a coiled coil. Acidic residues predominate over residues Met691–Ala702. A compositionally biased stretch (basic residues) spans Arg776–Lys802.

The protein belongs to the DEAD box helicase family. DDX27/DRS1 subfamily.

It catalyses the reaction ATP + H2O = ADP + phosphate + H(+). The protein is DEAD-box ATP-dependent RNA helicase 28 of Oryza sativa subsp. japonica (Rice).